An 859-amino-acid chain; its full sequence is Heat shock protein 105 kDa (859 aa).

An N-acetylserine modification is found at serine 2. N6-acetyllysine is present on lysine 471. 2 positions are modified to phosphoserine: serine 509 and serine 510. Disordered regions lie at residues 515–585 (MDCQ…PPEA) and 797–859 (CEPV…MDLD). Residues 533-555 (QQDNNEAGTQPQVQTDGHQTSQS) show a composition bias toward polar residues. Serine 558 bears the Phosphoserine mark. At threonine 562 the chain carries Phosphothreonine. Composition is skewed to basic and acidic residues over residues 564–585 (EENKIPDADKANEKKVDQPPEA) and 806–815 (PKIESPKLER). The residue at position 810 (serine 810) is a Phosphoserine. Threonine 816 carries the post-translational modification Phosphothreonine. Basic and acidic residues predominate over residues 822 to 831 (TDKKEEDLDG). The segment covering 850 to 859 (EKSSINMDLD) has biased composition (polar residues).

It belongs to the heat shock protein 70 family. Interacts with HSPA8/HSC70. Interacts with HSPA1A (via NBD) and HSPA1B (via NBD). Phosphorylation on Ser-509 may be important for regulation of the HSPA8/HSC70 chaperone activity.

It is found in the cytoplasm. Functionally, acts as a nucleotide-exchange factor (NEF) for chaperone proteins HSPA1A and HSPA1B, promoting the release of ADP from HSPA1A/B thereby triggering substrate release. Prevents the aggregation of denatured proteins in cells under severe stress, on which the ATP levels decrease markedly. Inhibits HSPA8/HSC70 ATPase and chaperone activities. This Bos taurus (Bovine) protein is Heat shock protein 105 kDa (HSPH1).